Here is a 171-residue protein sequence, read N- to C-terminus: Ribosome maturation factor RimM (171 aa).

The region spanning 93–167 (DGVYYYKDIF…KVYVELMEGL (75 aa)) is the PRC barrel domain.

It belongs to the RimM family. In terms of assembly, binds ribosomal protein uS19.

It localises to the cytoplasm. Functionally, an accessory protein needed during the final step in the assembly of 30S ribosomal subunit, possibly for assembly of the head region. Essential for efficient processing of 16S rRNA. May be needed both before and after RbfA during the maturation of 16S rRNA. It has affinity for free ribosomal 30S subunits but not for 70S ribosomes. This chain is Ribosome maturation factor RimM, found in Lactobacillus helveticus (strain DPC 4571).